The primary structure comprises 68 residues: Amphipathic peptide OcyC1 (68 aa).

The signal sequence occupies residues 1–23 (MKAQLCILLIALVLFQTFSQSDA). Phenylalanine 36 bears the Phenylalanine amide mark. The propeptide occupies 38 to 68 (RRGLNDLDDLDELFDGEISQADVDFLNELMR).

This sequence belongs to the non-disulfide-bridged peptide (NDBP) superfamily. Short antimicrobial peptide (group 4) family. In terms of tissue distribution, expressed by the venom gland.

The protein localises to the secreted. It localises to the target cell membrane. Functionally, antimicrobial peptide. Inhibits the growth of Gram-positive and Gram-negative bacteria. Shows antifungal activity with MIC values ranging from 12.5 to 25 uM. Also shows an inhibitory activity on C.albicans biofilms at high concentrations. Shows low cytotoxic activity and has weak hemolytic activity. The chain is Amphipathic peptide OcyC1 from Opisthacanthus cayaporum (South American scorpion).